The sequence spans 75 residues: Small ribosomal subunit protein bS18c (75 aa).

Belongs to the bacterial ribosomal protein bS18 family. In terms of assembly, part of the 30S ribosomal subunit.

The protein localises to the plastid. Its subcellular location is the chloroplast. This Marchantia polymorpha (Common liverwort) protein is Small ribosomal subunit protein bS18c (rps18).